Here is a 148-residue protein sequence, read N- to C-terminus: Arginine repressor (148 aa).

It belongs to the ArgR family.

The protein localises to the cytoplasm. The protein operates within amino-acid biosynthesis; L-arginine biosynthesis [regulation]. Functionally, regulates arginine biosynthesis genes. This is Arginine repressor from Chlorobium luteolum (strain DSM 273 / BCRC 81028 / 2530) (Pelodictyon luteolum).